A 1491-amino-acid polypeptide reads, in one-letter code: Chromosome partition protein MukB (1491 aa).

Residue glycine 34–serine 41 coordinates ATP. Coiled coils occupy residues leucine 302–glutamate 450, alanine 490–serine 600, arginine 781–serine 806, glutamate 836–threonine 1109, and valine 1210–aspartate 1239. The interval proline 667–arginine 784 is flexible hinge. Residues glutamine 1059–glutamate 1080 form a disordered region.

The protein belongs to the SMC family. MukB subfamily. As to quaternary structure, homodimerization via its hinge domain. Binds to DNA via its C-terminal region. Interacts, and probably forms a ternary complex, with MukE and MukF via its C-terminal region. The complex formation is stimulated by calcium or magnesium. Interacts with tubulin-related protein FtsZ.

Its subcellular location is the cytoplasm. It is found in the nucleoid. In terms of biological role, plays a central role in chromosome condensation, segregation and cell cycle progression. Functions as a homodimer, which is essential for chromosome partition. Involved in negative DNA supercoiling in vivo, and by this means organize and compact chromosomes. May achieve or facilitate chromosome segregation by condensation DNA from both sides of a centrally located replisome during cell division. The sequence is that of Chromosome partition protein MukB from Vibrio cholerae serotype O1 (strain ATCC 39315 / El Tor Inaba N16961).